The sequence spans 161 residues: Protein-export protein SecB (161 aa).

It belongs to the SecB family. As to quaternary structure, homotetramer, a dimer of dimers. One homotetramer interacts with 1 SecA dimer.

It is found in the cytoplasm. Functionally, one of the proteins required for the normal export of preproteins out of the cell cytoplasm. It is a molecular chaperone that binds to a subset of precursor proteins, maintaining them in a translocation-competent state. It also specifically binds to its receptor SecA. The sequence is that of Protein-export protein SecB from Coxiella burnetii (strain CbuG_Q212) (Coxiella burnetii (strain Q212)).